The primary structure comprises 449 residues: UDP-N-acetylglucosamine 1-carboxyvinyltransferase (449 aa).

Position 51–52 (51–52) interacts with phosphoenolpyruvate; that stretch reads KN. A UDP-N-acetyl-alpha-D-glucosamine-binding site is contributed by Arg121. Residue Cys145 is the Proton donor of the active site. A 2-(S-cysteinyl)pyruvic acid O-phosphothioketal modification is found at Cys145. UDP-N-acetyl-alpha-D-glucosamine is bound by residues 150–154, Asp333, and Ile355; that span reads RPVDQ.

This sequence belongs to the EPSP synthase family. MurA subfamily.

Its subcellular location is the cytoplasm. The enzyme catalyses phosphoenolpyruvate + UDP-N-acetyl-alpha-D-glucosamine = UDP-N-acetyl-3-O-(1-carboxyvinyl)-alpha-D-glucosamine + phosphate. Its pathway is cell wall biogenesis; peptidoglycan biosynthesis. Cell wall formation. Adds enolpyruvyl to UDP-N-acetylglucosamine. This is UDP-N-acetylglucosamine 1-carboxyvinyltransferase from Burkholderia lata (strain ATCC 17760 / DSM 23089 / LMG 22485 / NCIMB 9086 / R18194 / 383).